Here is a 122-residue protein sequence, read N- to C-terminus: MEDKPLVVSKQKTEVVCGVPTQVVCTAFSSHILVVVTQFGKMGTLVSLEPSNVANDISKPVLTTRVLLGQDEPLIHVFAKNLVAFVSQEAGNRAVLLAMAVKDKSMERLKALKEVIRLCQVW.

At M1 the chain carries N-acetylmethionine.

It belongs to the PSMG3 family. As to quaternary structure, homodimer. Interacts directly with alpha and beta subunits of the 20S proteasome but dissociates before the formation of half-proteasomes, probably upon recruitment of POMP. Interacts with PSMG4.

In terms of biological role, chaperone protein which promotes assembly of the 20S proteasome. May cooperate with PSMG1-PSMG2 heterodimers to orchestrate the correct assembly of proteasomes. The polypeptide is Proteasome assembly chaperone 3 (Psmg3) (Mus musculus (Mouse)).